Reading from the N-terminus, the 151-residue chain is uncharacterized protein (151 aa).

This is an uncharacterized protein from Archaeoglobus fulgidus (strain ATCC 49558 / DSM 4304 / JCM 9628 / NBRC 100126 / VC-16).